A 127-amino-acid chain; its full sequence is Small ribosomal subunit protein uS11 (127 aa).

This sequence belongs to the universal ribosomal protein uS11 family. As to quaternary structure, part of the 30S ribosomal subunit. Interacts with proteins S7 and S18. Binds to IF-3.

In terms of biological role, located on the platform of the 30S subunit, it bridges several disparate RNA helices of the 16S rRNA. Forms part of the Shine-Dalgarno cleft in the 70S ribosome. This is Small ribosomal subunit protein uS11 from Anaeromyxobacter sp. (strain Fw109-5).